The chain runs to 171 residues: Non-specific lipid transfer protein GPI-anchored 19 (171 aa).

Positions 1–18 (MILAILALVIATFLYGGA) are cleaved as a signal peptide. Disulfide bonds link Cys25–Cys66, Cys35–Cys50, Cys51–Cys93, and Cys64–Cys103. N-linked (GlcNAc...) asparagine glycosylation is found at Asn72 and Asn82. The tract at residues 113-149 (LPANTPVGSPRSAPSPSGTTSPANTPSGSKKFPLSNE) is disordered. Positions 118 to 141 (PVGSPRSAPSPSGTTSPANTPSGS) are enriched in low complexity. Ser147 carries GPI-anchor amidated serine lipidation. N-linked (GlcNAc...) asparagine glycosylation is present at Asn148. Positions 148 to 171 (NESSSKSNVIILSFVSIALVLAII) are cleaved as a propeptide — removed in mature form.

The protein belongs to the plant LTP family.

Its subcellular location is the cell membrane. Probable lipid transfer protein. The protein is Non-specific lipid transfer protein GPI-anchored 19 of Arabidopsis thaliana (Mouse-ear cress).